Consider the following 416-residue polypeptide: 4-hydroxy-3-methylbut-2-en-1-yl diphosphate synthase (flavodoxin) (416 aa).

Positions 304, 307, 350, and 357 each coordinate [4Fe-4S] cluster.

It belongs to the IspG family. The cofactor is [4Fe-4S] cluster.

It catalyses the reaction (2E)-4-hydroxy-3-methylbut-2-enyl diphosphate + oxidized [flavodoxin] + H2O + 2 H(+) = 2-C-methyl-D-erythritol 2,4-cyclic diphosphate + reduced [flavodoxin]. It functions in the pathway isoprenoid biosynthesis; isopentenyl diphosphate biosynthesis via DXP pathway; isopentenyl diphosphate from 1-deoxy-D-xylulose 5-phosphate: step 5/6. Functionally, converts 2C-methyl-D-erythritol 2,4-cyclodiphosphate (ME-2,4cPP) into 1-hydroxy-2-methyl-2-(E)-butenyl 4-diphosphate. The chain is 4-hydroxy-3-methylbut-2-en-1-yl diphosphate synthase (flavodoxin) from Rhizobium leguminosarum bv. trifolii (strain WSM2304).